A 504-amino-acid polypeptide reads, in one-letter code: Bacterial leucyl aminopeptidase (504 aa).

Positions 1 to 21 (MKYTKTLLAMVLSATFCQAYA) are cleaved as a signal peptide. The propeptide occupies 22-106 (EDKVWISIGA…AMPTTLASFV (85 aa)). 4 residues coordinate Zn(2+): histidine 203, aspartate 223, glutamate 258, and aspartate 285. Cysteine 329 and cysteine 333 are disulfide-bonded. Zn(2+) is bound at residue histidine 362. Residues 406–504 (LEDGVPVTDL…SGASLKASTF (99 aa)) constitute a propeptide, removed in mature form.

Belongs to the peptidase M28 family. M28E subfamily. Zn(2+) serves as cofactor.

It localises to the secreted. It catalyses the reaction Release of an N-terminal amino acid, preferentially leucine, but not glutamic or aspartic acids.. This is Bacterial leucyl aminopeptidase from Vibrio proteolyticus (Aeromonas proteolytica).